The following is a 184-amino-acid chain: Protein YrdA (184 aa).

The protein belongs to the gamma-class carbonic anhydrase family.

This Escherichia coli (strain K12) protein is Protein YrdA (yrdA).